A 55-amino-acid polypeptide reads, in one-letter code: Sec-independent protein translocase protein TatA (55 aa).

A helical membrane pass occupies residues Met-1–Ala-21.

It belongs to the TatA/E family. As to quaternary structure, the Tat system comprises two distinct complexes: a TatABC complex, containing multiple copies of TatA, TatB and TatC subunits, and a separate TatA complex, containing only TatA subunits. Substrates initially bind to the TatABC complex, which probably triggers association of the separate TatA complex to form the active translocon.

It localises to the cell membrane. Its function is as follows. Part of the twin-arginine translocation (Tat) system that transports large folded proteins containing a characteristic twin-arginine motif in their signal peptide across membranes. TatA could form the protein-conducting channel of the Tat system. The protein is Sec-independent protein translocase protein TatA of Wolbachia pipientis wMel.